A 154-amino-acid chain; its full sequence is MRISIVAIGRLARSPETELVKLYVERATNAGRALGLGPVEVVEVESRKPGKAAEAEALRAHLSDAHVIACDERGAARPSRAFAEEIGRLRDQGVRRLVFLIGGADGLDPALVAQANGKLAFGPQTWPHALARAMLAEQVYRAVSILAGSPYHRD.

Gly-102 lines the S-adenosyl-L-methionine pocket.

The protein belongs to the RNA methyltransferase RlmH family. As to quaternary structure, homodimer.

It is found in the cytoplasm. The enzyme catalyses pseudouridine(1915) in 23S rRNA + S-adenosyl-L-methionine = N(3)-methylpseudouridine(1915) in 23S rRNA + S-adenosyl-L-homocysteine + H(+). Specifically methylates the pseudouridine at position 1915 (m3Psi1915) in 23S rRNA. The protein is Ribosomal RNA large subunit methyltransferase H of Phenylobacterium zucineum (strain HLK1).